A 606-amino-acid polypeptide reads, in one-letter code: ATP-dependent rRNA helicase SPB4 (606 aa).

The Q motif motif lies at 7 to 35; the sequence is WDNLGFSLLPWIRTGLDVMGFETMTPVQA. The region spanning 38–224 is the Helicase ATP-binding domain; the sequence is IPMLAGNKDV…KTGLRNPVRI (187 aa). 51–58 lines the ATP pocket; that stretch reads SVTGSGKT. The DEAD box signature appears at 172–175; it reads DEAD. The Helicase C-terminal domain occupies 248-404; that stretch reads KLQLLVSILN…ELDLEVKGIT (157 aa). Position 254 is a phosphoserine (Ser-254). A coiled-coil region spans residues 539–582; the sequence is KTLTKERKLERKEKMSLKRKAIEEELKAEELDENAEEERIKEDW.

The protein belongs to the DEAD box helicase family. DDX55/SPB4 subfamily. In terms of assembly, component of pre-60S ribosomal complexes.

The protein resides in the nucleus. It localises to the nucleolus. The enzyme catalyses ATP + H2O = ADP + phosphate + H(+). Its function is as follows. ATP-binding RNA helicase involved in the biogenesis of 60S ribosomal subunits. Binds 90S pre-ribosomal particles and dissociates from pre-60S ribosomal particles after processing of 27SB pre-rRNA. Required for the normal formation of 18S rRNA through the processing of pre-rRNAs at sites A0, A1 and A2, and the normal formation of 25S and 5.8S rRNAs through the processing of pre-rRNAs at sites C1 and C2. Also required for recruitment of NOG2 to pre-ribosomes. The sequence is that of ATP-dependent rRNA helicase SPB4 from Saccharomyces cerevisiae (strain ATCC 204508 / S288c) (Baker's yeast).